The primary structure comprises 335 residues: Biotin synthase (335 aa).

Residues Val-53 to Arg-276 form the Radical SAM core domain. [4Fe-4S] cluster-binding residues include Cys-66, Cys-70, and Cys-73. [2Fe-2S] cluster-binding residues include Cys-109, Cys-142, Cys-201, and Arg-271.

The protein belongs to the radical SAM superfamily. Biotin synthase family. Homodimer. The cofactor is [4Fe-4S] cluster. [2Fe-2S] cluster is required as a cofactor.

The enzyme catalyses (4R,5S)-dethiobiotin + (sulfur carrier)-SH + 2 reduced [2Fe-2S]-[ferredoxin] + 2 S-adenosyl-L-methionine = (sulfur carrier)-H + biotin + 2 5'-deoxyadenosine + 2 L-methionine + 2 oxidized [2Fe-2S]-[ferredoxin]. It functions in the pathway cofactor biosynthesis; biotin biosynthesis; biotin from 7,8-diaminononanoate: step 2/2. Its function is as follows. Catalyzes the conversion of dethiobiotin (DTB) to biotin by the insertion of a sulfur atom into dethiobiotin via a radical-based mechanism. The chain is Biotin synthase from Acidothermus cellulolyticus (strain ATCC 43068 / DSM 8971 / 11B).